Consider the following 228-residue polypeptide: UPF0758 protein CLD_1541 (228 aa).

The region spanning 106–228 (KINTPLDVSN…YVSMKEKGTI (123 aa)) is the MPN domain. Residues H177, H179, and D190 each coordinate Zn(2+). A JAMM motif motif is present at residues 177-190 (HNHPSGDPTPSKED).

Belongs to the UPF0758 family.

The protein is UPF0758 protein CLD_1541 of Clostridium botulinum (strain Okra / Type B1).